The chain runs to 208 residues: Probable nicotinate-nucleotide adenylyltransferase (208 aa).

The protein belongs to the NadD family.

The catalysed reaction is nicotinate beta-D-ribonucleotide + ATP + H(+) = deamido-NAD(+) + diphosphate. It participates in cofactor biosynthesis; NAD(+) biosynthesis; deamido-NAD(+) from nicotinate D-ribonucleotide: step 1/1. In terms of biological role, catalyzes the reversible adenylation of nicotinate mononucleotide (NaMN) to nicotinic acid adenine dinucleotide (NaAD). This is Probable nicotinate-nucleotide adenylyltransferase from Kineococcus radiotolerans (strain ATCC BAA-149 / DSM 14245 / SRS30216).